The following is a 392-amino-acid chain: Alaserpin (392 aa).

A signal peptide spans 1-16 (MKIIMCIFGLAALAMA). N-linked (GlcNAc...) asparagine glycosylation occurs at Asn-85.

Belongs to the serpin family. In terms of tissue distribution, hemolymph.

It localises to the secreted. The protein resides in the extracellular space. Inhibits elastase. The polypeptide is Alaserpin (Manduca sexta (Tobacco hawkmoth)).